The primary structure comprises 63 residues: UPF0337 protein Atu0782 (63 aa).

The interval 1–63 is disordered; sequence MGSTSDKIAG…DAVKGAVDRM (63 aa). The span at 51–63 shows a compositional bias: basic and acidic residues; sequence KAKDAVKGAVDRM.

The protein belongs to the UPF0337 (CsbD) family.

The sequence is that of UPF0337 protein Atu0782 from Agrobacterium fabrum (strain C58 / ATCC 33970) (Agrobacterium tumefaciens (strain C58)).